The primary structure comprises 110 residues: Protein YcgL (110 aa).

In terms of domain architecture, YcgL spans 14-98; sequence MFCVIYRSSK…PPEDLLKQHL (85 aa). The segment at 87 to 110 is disordered; sequence PPPPEDLLKQHLSSVGQNTSPADR. Positions 97–110 are enriched in polar residues; sequence HLSSVGQNTSPADR.

The chain is Protein YcgL from Salmonella choleraesuis (strain SC-B67).